We begin with the raw amino-acid sequence, 779 residues long: Protein zer-1 homolog (779 aa).

N-acetylalanine is present on Ala2. 3 LRR repeats span residues 226–245 (SLVL…IVQL), 246–281 (HKLR…KLTR), and 291–315 (LGNL…KTDE). 5 ARM repeats span residues 440 to 480 (RSEQ…NFSI), 524 to 569 (DNDH…NITD), 571 to 613 (TPDN…NVAE), 615 to 656 (KELR…HIMF), and 727 to 769 (PDKY…HCSN).

Belongs to the zyg-11 family. In terms of assembly, interacts with the ELOC-ELOB/Elongin BC complex. Part of an E3 ubiquitin ligase complex including ZER1, CUL2 and Elongin BC.

Functionally, serves as substrate adapter subunit in the E3 ubiquitin ligase complex ZYG11B-CUL2-Elongin BC. Acts redudantly with ZYG11B to target substrates bearing N-terminal glycine degrons for proteasomal degradation. Involved in the clearance of proteolytic fragments generated by caspase cleavage during apoptosis since N-terminal glycine degrons are strongly enriched at caspase cleavage sites. Also important in the quality control of protein N-myristoylation in which N-terminal glycine degrons are conditionally exposed after a failure of N-myristoylation. This is Protein zer-1 homolog from Mus musculus (Mouse).